The chain runs to 361 residues: Probable galacturonosyltransferase-like 7 (361 aa).

The helical; Signal-anchor for type II membrane protein transmembrane segment at 1 to 21 threads the bilayer; the sequence is MLWIMRFSGLFSAALVIIVLS. Residues 22–361 are Lumenal-facing; the sequence is PSLQSFPPAE…PYDLYGHYSR (340 aa). N-linked (GlcNAc...) asparagine glycosylation is present at Asn217.

Belongs to the glycosyltransferase 8 family.

The protein localises to the golgi apparatus membrane. Its pathway is glycan metabolism; pectin biosynthesis. Its function is as follows. May be involved in pectin and/or xylans biosynthesis in cell walls. This chain is Probable galacturonosyltransferase-like 7 (GATL7), found in Arabidopsis thaliana (Mouse-ear cress).